The chain runs to 206 residues: Large ribosomal subunit protein uL4 (206 aa).

Residues 49-76 (QSAKTRTEVRGGGIKPWRQKGTGRARQG) form a disordered region.

It belongs to the universal ribosomal protein uL4 family. Part of the 50S ribosomal subunit.

In terms of biological role, one of the primary rRNA binding proteins, this protein initially binds near the 5'-end of the 23S rRNA. It is important during the early stages of 50S assembly. It makes multiple contacts with different domains of the 23S rRNA in the assembled 50S subunit and ribosome. Forms part of the polypeptide exit tunnel. The sequence is that of Large ribosomal subunit protein uL4 from Clostridium botulinum (strain Alaska E43 / Type E3).